Consider the following 413-residue polypeptide: uncharacterized protein (413 aa).

Lys-265 carries the post-translational modification N6-(pyridoxal phosphate)lysine.

This sequence belongs to the threonine aldolase family. Pyridoxal 5'-phosphate serves as cofactor.

This is an uncharacterized protein from Caenorhabditis elegans.